Here is a 489-residue protein sequence, read N- to C-terminus: Putative general negative regulator of transcription C16C9.04c (489 aa).

The RING-type zinc finger occupies 18–61; the sequence is CPLCMEEIDISDKNFKPCQCGYRVCRFCWHHIKEDLNGRCPACR. A coiled-coil region spans residues 76-109; it reads AEEWKMDLHRKNERKKREKERKEVELSNRKHLAN. Residues 116-198 form the RRM domain; the sequence is NLAYVNGLSP…VSDGRHLRAS (83 aa). The segment at 199–226 adopts a C3H1-type zinc-finger fold; the sequence is YGTTKYCTSYLRNQQCPNPSCMYLHEPG. Composition is skewed to polar residues over residues 246–261 and 466–479; these read LSTKPNVVNGATHSPS and ENQPPTSLGINNGN. Disordered regions lie at residues 246 to 268 and 458 to 489; these read LSTKPNVVNGATHSPSPSLPFKT and VPEQEKSAENQPPTSLGINNGNPVMPPPGFQS.

The protein resides in the nucleus. May negatively regulate the basal and activated transcription of many genes. This Schizosaccharomyces pombe (strain 972 / ATCC 24843) (Fission yeast) protein is Putative general negative regulator of transcription C16C9.04c.